The following is a 312-amino-acid chain: Peroxisome biogenesis factor 2 (312 aa).

The Peroxisomal matrix segment spans residues Met-1 to Leu-22. Residues Arg-23 to Gln-49 traverse the membrane as a helical segment. Over His-50–Ile-55 the chain is Cytoplasmic. The chain crosses the membrane as a helical span at residues Leu-56–Ala-81. Topologically, residues Thr-82–Met-105 are peroxisomal matrix. Residues Ser-106 to Leu-132 form a helical membrane-spanning segment. The Cytoplasmic segment spans residues Asn-133–Arg-141. The chain crosses the membrane as a helical span at residues Lys-142 to Arg-168. The Peroxisomal matrix segment spans residues Gly-169–Asn-195. Residues Phe-196–Ile-219 traverse the membrane as a helical segment. Residues Asn-220–Ser-312 lie on the Cytoplasmic side of the membrane. Zn(2+)-binding residues include Cys-252, Cys-255, Cys-267, His-269, Cys-272, Cys-275, Cys-288, and Cys-291. The segment at Cys-252–Gly-292 adopts an RING-type zinc-finger fold.

This sequence belongs to the pex2/pex10/pex12 family. As to quaternary structure, component of the PEX2-PEX10-PEX12 retrotranslocation channel.

The protein localises to the peroxisome membrane. It catalyses the reaction [E2 ubiquitin-conjugating enzyme]-S-ubiquitinyl-L-cysteine + [acceptor protein]-L-cysteine = [E2 ubiquitin-conjugating enzyme]-L-cysteine + [acceptor protein]-S-ubiquitinyl-L-cysteine.. It carries out the reaction S-ubiquitinyl-[E2 ubiquitin-conjugating enzyme]-L-cysteine + [acceptor protein]-L-lysine = [E2 ubiquitin-conjugating enzyme]-L-cysteine + N(6)-ubiquitinyl-[acceptor protein]-L-lysine.. The protein operates within protein modification; protein ubiquitination. E3 ubiquitin-protein ligase component of a retrotranslocation channel required for peroxisome organization by mediating export of the PEX5 receptor from peroxisomes to the cytosol, thereby promoting PEX5 recycling. The retrotranslocation channel is composed of PEX2, PEX10 and PEX12; each subunit contributing transmembrane segments that coassemble into an open channel that specifically allows the passage of PEX5 through the peroxisomal membrane. PEX2 also regulates peroxisome organization by acting as a E3 ubiquitin-protein ligase. This is Peroxisome biogenesis factor 2 (pex2) from Danio rerio (Zebrafish).